The sequence spans 119 residues: Small ribosomal subunit protein uS13 (119 aa).

The segment at 92-119 (RRGLPVRGQRTKTNARTRKGPRKAIRAR) is disordered.

Belongs to the universal ribosomal protein uS13 family. As to quaternary structure, part of the 30S ribosomal subunit. Forms a loose heterodimer with protein S19. Forms two bridges to the 50S subunit in the 70S ribosome.

Located at the top of the head of the 30S subunit, it contacts several helices of the 16S rRNA. In the 70S ribosome it contacts the 23S rRNA (bridge B1a) and protein L5 of the 50S subunit (bridge B1b), connecting the 2 subunits; these bridges are implicated in subunit movement. Contacts the tRNAs in the A and P-sites. In Nitrosomonas eutropha (strain DSM 101675 / C91 / Nm57), this protein is Small ribosomal subunit protein uS13.